A 445-amino-acid polypeptide reads, in one-letter code: GTPase Der (445 aa).

2 EngA-type G domains span residues 3 to 167 and 180 to 353; these read PVIA…YAGQ and IKIA…AAAM. Residues 9–16, 56–60, 119–122, 186–193, 233–237, and 298–301 each bind GTP; these read GRPNVGKS, DTGGF, NKAE, DTAGL, and NKWD. The region spanning 354-438 is the KH-like domain; that stretch reads AKLPTPKLTR…PLRIEFRSSN (85 aa).

The protein belongs to the TRAFAC class TrmE-Era-EngA-EngB-Septin-like GTPase superfamily. EngA (Der) GTPase family. As to quaternary structure, associates with the 50S ribosomal subunit.

In terms of biological role, GTPase that plays an essential role in the late steps of ribosome biogenesis. This Burkholderia vietnamiensis (strain G4 / LMG 22486) (Burkholderia cepacia (strain R1808)) protein is GTPase Der.